Here is a 239-residue protein sequence, read N- to C-terminus: Fatty acid metabolism regulator protein (239 aa).

The HTH gntR-type domain maps to 6 to 74 (QSPAGFAEEY…HGKPTKVNNF (69 aa)). Positions 34 to 53 (ERELSELIGVTRTTLREVLQ) form a DNA-binding region, H-T-H motif.

Homodimer.

It is found in the cytoplasm. Multifunctional regulator of fatty acid metabolism. The sequence is that of Fatty acid metabolism regulator protein from Enterobacter sp. (strain 638).